A 322-amino-acid polypeptide reads, in one-letter code: HPr kinase/phosphorylase (322 aa).

Residues His146 and Lys167 contribute to the active site. 161-168 provides a ligand contact to ATP; that stretch reads GDSGLGKS. A Mg(2+)-binding site is contributed by Ser168. Residue Asp185 is the Proton acceptor; for phosphorylation activity. Proton donor; for dephosphorylation activity of the active site. The interval 209–218 is important for the catalytic mechanism of both phosphorylation and dephosphorylation; that stretch reads LEVRGLGLLD. Glu210 contributes to the Mg(2+) binding site. Arg250 is an active-site residue. Residues 271 to 276 are important for the catalytic mechanism of dephosphorylation; that stretch reads QVAAGR.

The protein belongs to the HPrK/P family. As to quaternary structure, homohexamer. The cofactor is Mg(2+).

The enzyme catalyses [HPr protein]-L-serine + ATP = [HPr protein]-O-phospho-L-serine + ADP + H(+). It carries out the reaction [HPr protein]-O-phospho-L-serine + phosphate + H(+) = [HPr protein]-L-serine + diphosphate. Its function is as follows. Catalyzes the ATP- as well as the pyrophosphate-dependent phosphorylation of a specific serine residue in HPr, a phosphocarrier protein of the phosphoenolpyruvate-dependent sugar phosphotransferase system (PTS). HprK/P also catalyzes the pyrophosphate-producing, inorganic phosphate-dependent dephosphorylation (phosphorolysis) of seryl-phosphorylated HPr (P-Ser-HPr). The polypeptide is HPr kinase/phosphorylase (Burkholderia ambifaria (strain ATCC BAA-244 / DSM 16087 / CCUG 44356 / LMG 19182 / AMMD) (Burkholderia cepacia (strain AMMD))).